An 86-amino-acid chain; its full sequence is Large ribosomal subunit protein bL31B (86 aa).

This sequence belongs to the bacterial ribosomal protein bL31 family. Type B subfamily. Part of the 50S ribosomal subunit.

This Streptococcus uberis (strain ATCC BAA-854 / 0140J) protein is Large ribosomal subunit protein bL31B.